Here is a 125-residue protein sequence, read N- to C-terminus: Probable mercury resistance operon repressor (125 aa).

The region spanning 15 to 109 (VPCTHPDTTA…LARCLAADNA (95 aa)) is the HTH arsR-type domain. The segment at residues 49–68 (SAECVEHAGISQPRVSVHLS) is a DNA-binding region (H-T-H motif). Hg(2+) contacts are provided by C69, C73, and C114.

In terms of biological role, negatively regulates the mercuric reductase merA and the organolyase merB in the absence of mercuric ions. In Streptomyces lividans, this protein is Probable mercury resistance operon repressor (merR).